Consider the following 218-residue polypeptide: MKKKVRVIPRTSWAATSLWTAQYKTISILLFALSILGIGDGLIVLSGLGSTPWTVLSQGIAIQTNFDIGWSSFLISCAVMLVWKPLKLRLGLGTLLNIIVIALFLGITTKILAPPTALFSRMIFCLIGILLYGFGTALYLTCHLGAGPRDGLMVGICQRFHLSINVVRSSLEISVCLLGFLLGGVVGLGTVLFATSIGSVVQFFLNIIARLPHIPYEK.

The next 5 helical transmembrane spans lie at 28-48, 66-86, 92-112, 122-142, and 173-193; these read ILLFALSILGIGDGLIVLSGL, FDIGWSSFLISCAVMLVWKPL, LGTLLNIIVIALFLGITTKIL, MIFCLIGILLYGFGTALYLTC, and ISVCLLGFLLGGVVGLGTVLF.

The protein localises to the cell membrane. This is an uncharacterized protein from Haemophilus influenzae (strain ATCC 51907 / DSM 11121 / KW20 / Rd).